The primary structure comprises 447 residues: Tubulin beta-4 chain (447 aa).

Residues Gln11, Glu71, Ser140, Gly144, Thr145, Gly146, Asn206, and Asn228 each contribute to the GTP site. Glu71 is a binding site for Mg(2+). Positions 428–447 (QDATAEEYEEEEHDGEEEHA) are disordered. Residues 431 to 447 (TAEEYEEEEHDGEEEHA) show a composition bias toward acidic residues.

It belongs to the tubulin family. In terms of assembly, dimer of alpha and beta chains. A typical microtubule is a hollow water-filled tube with an outer diameter of 25 nm and an inner diameter of 15 nM. Alpha-beta heterodimers associate head-to-tail to form protofilaments running lengthwise along the microtubule wall with the beta-tubulin subunit facing the microtubule plus end conferring a structural polarity. Microtubules usually have 13 protofilaments but different protofilament numbers can be found in some organisms and specialized cells. Mg(2+) serves as cofactor.

The protein resides in the cytoplasm. Its subcellular location is the cytoskeleton. Its function is as follows. Tubulin is the major constituent of microtubules, a cylinder consisting of laterally associated linear protofilaments composed of alpha- and beta-tubulin heterodimers. Microtubules grow by the addition of GTP-tubulin dimers to the microtubule end, where a stabilizing cap forms. Below the cap, tubulin dimers are in GDP-bound state, owing to GTPase activity of alpha-tubulin. The sequence is that of Tubulin beta-4 chain (TUBB4) from Zea mays (Maize).